The following is an 82-amino-acid chain: RNA-binding protein Hfq (82 aa).

One can recognise a Sm domain in the interval 11 to 71 (DTFLNHVRKT…ISTIMPGAPI (61 aa)).

The protein belongs to the Hfq family. As to quaternary structure, homohexamer.

In terms of biological role, RNA chaperone that binds small regulatory RNA (sRNAs) and mRNAs to facilitate mRNA translational regulation in response to envelope stress, environmental stress and changes in metabolite concentrations. Also binds with high specificity to tRNAs. In Rhodopseudomonas palustris (strain HaA2), this protein is RNA-binding protein Hfq.